A 397-amino-acid chain; its full sequence is Ubiquitin-like modifier-activating enzyme 5 (397 aa).

Residues Gly-77, Asp-98, Lys-121, Asn-144, and Asn-178 each contribute to the ATP site. 2 residues coordinate Zn(2+): Cys-220 and Cys-223. Cys-244 serves as the catalytic Glycyl thioester intermediate. Residues Cys-297 and Cys-302 each contribute to the Zn(2+) site. The short motif at 329-341 (VVHEDNDWGIELV) is the UFM1-interacting sequence (UIS) element. Positions 342–372 (SEVSEEELKAASGPVPDLPEGIKVAYTIPIT) are linker. A UFC1-binding sequence (UFC) motif is present at residues 382–397 (DSEQSLDELMAQMKNL).

It belongs to the ubiquitin-activating E1 family. UBA5 subfamily. In terms of assembly, homodimer; homodimerization is required for ufm1 activation. Interacts (via UIS motif) with ufm1; binds ufm1 via a trans-binding mechanism in which ufm1 interacts with distinct sites in both subunits of the uba5 homodimer. Interacts (via C-terminus) with ufc1.

It localises to the cytoplasm. Its subcellular location is the nucleus. The protein localises to the endoplasmic reticulum membrane. The protein resides in the golgi apparatus. In terms of biological role, E1-like enzyme which specifically catalyzes the first step in ufmylation. Activates ufm1 by first adenylating its C-terminal glycine residue with ATP, and thereafter linking this residue to the side chain of a cysteine residue in E1, yielding a ufm1-E1 thioester and free AMP. Activates ufm1 via a trans-binding mechanism, in which ufm1 interacts with distinct sites in both subunits of the uba5 homodimer. Trans-binding also promotes stabilization of the uba5 homodimer, and enhances ATP-binding. Transfer of ufm1 from uba5 to the E2-like enzyme UFC1 also takes place using a trans mechanism. Ufmylation plays a key role in various processes, such as ribosome recycling, response to DNA damage, interferon response or reticulophagy (also called ER-phagy). The polypeptide is Ubiquitin-like modifier-activating enzyme 5 (Xenopus laevis (African clawed frog)).